The following is an 89-amino-acid chain: DNA/RNA-binding protein Alba 2 (89 aa).

Lys-12 is subject to N6-acetyllysine. The Zn(2+) site is built by Lys-14, Asp-18, and Asp-22.

It belongs to the histone-like Alba family. In terms of assembly, forms homodimers and homotetramers. Homodimer at pH below 6.0. Forms homotetramers and higher order homooligomers at near the growth temperature of 80 degrees Celsius and pH 7.0. Interacts with Alba 1; heterodimers lack cooperative DNA-binding behavior and result in more compact chromatin structures compared to Alba 1 homodimers. Post-translationally, acetylated. Acetylation at Lys-12 decreases DNA-binding affinity.

The protein localises to the cytoplasm. Its subcellular location is the chromosome. Binds single-stranded DNA, RNA and double-stranded DNA. Involved in DNA compaction. The chain is DNA/RNA-binding protein Alba 2 from Saccharolobus solfataricus (strain ATCC 35092 / DSM 1617 / JCM 11322 / P2) (Sulfolobus solfataricus).